Here is a 176-residue protein sequence, read N- to C-terminus: Outer membrane protein assembly factor BamE (176 aa).

The first 21 residues, Met-1 to Gly-21, serve as a signal peptide directing secretion. A lipid anchor (N-palmitoyl cysteine) is attached at Cys-22. Cys-22 is lipidated: S-diacylglycerol cysteine. A disordered region spans residues Lys-121–Gln-176. Polar residues predominate over residues Gly-123 to Asp-132. Over residues Gln-134–Pro-144 the composition is skewed to basic and acidic residues. Residues Val-163–Gln-176 are compositionally biased toward pro residues.

It belongs to the BamE family. Part of the Bam complex.

The protein resides in the cell outer membrane. Its function is as follows. Part of the outer membrane protein assembly complex, which is involved in assembly and insertion of beta-barrel proteins into the outer membrane. May have a structural role in maintaining the cell envelope integrity. The polypeptide is Outer membrane protein assembly factor BamE (Pseudomonas aeruginosa (strain ATCC 15692 / DSM 22644 / CIP 104116 / JCM 14847 / LMG 12228 / 1C / PRS 101 / PAO1)).